A 385-amino-acid chain; its full sequence is MNPVPAQREYFLDSIRAWLMLLGIPFHISLIYSSHTWHVNSAEPSLWLTLFNDFIHSFRMQVFFVISGYFSYMLFLRYPLKKWWKVRVKRVGIPMLTAIPLLTLPQFIMLQYVKGKAESWPGLSLYDKYNTLAWELISHLWFLLVLVVMTTLCVWIFKRIRNNLENSDKTNKKFSMVKLSVIFLCLGIGYAVIRRTIFIVYPPILSNGMFNFIVMQTLFYLPFFILGALAFIFPHLKALFTTPSRGCTLAAALAFVAYLLNQRYGSGDAWMYETESVITMVLGLWMVNVVFSFGHRLLNFQSARVTYFVNASLFIYLVHHPLTLFFGAYITPHITSNWLGFLCGLIFVVGIAIILYEIHLRIPLLKFLFSGKPVVKRENDKAPAR.

A run of 10 helical transmembrane segments spans residues 17-37 (AWLMLLGIPFHISLIYSSHTW), 60-80 (MQVFFVISGYFSYMLFLRYPL), 91-111 (VGIPMLTAIPLLTLPQFIMLQ), 137-157 (ISHLWFLLVLVVMTTLCVWIF), 173-193 (KFSMVKLSVIFLCLGIGYAVI), 212-232 (FIVMQTLFYLPFFILGALAFI), 239-259 (LFTTPSRGCTLAAALAFVAYL), 274-294 (TESVITMVLGLWMVNVVFSFG), 311-331 (ASLFIYLVHHPLTLFFGAYIT), and 338-358 (WLGFLCGLIFVVGIAIILYEI).

It belongs to the acyltransferase 3 family. OpgC subfamily.

Its subcellular location is the cell membrane. Its pathway is glycan metabolism; osmoregulated periplasmic glucan (OPG) biosynthesis. Necessary for the succinyl substitution of periplasmic glucans. Could catalyze the transfer of succinyl residues from the cytoplasmic side of the membrane to the nascent glucan backbones on the periplasmic side of the membrane. This chain is Glucans biosynthesis protein C, found in Escherichia coli (strain SMS-3-5 / SECEC).